We begin with the raw amino-acid sequence, 236 residues long: Small ribosomal subunit protein uS2c (236 aa).

The protein belongs to the universal ribosomal protein uS2 family.

The protein localises to the plastid. Its subcellular location is the chloroplast. In Manihot esculenta (Cassava), this protein is Small ribosomal subunit protein uS2c (rps2).